The primary structure comprises 303 residues: Probable serine/threonine-protein kinase FPV212 (303 aa).

One can recognise a Protein kinase domain in the interval 25–303 (WILGKQLGSG…NYESLKQMFL (279 aa)). ATP-binding positions include 31–39 (LGSGGFGLV) and K54. The active-site Proton acceptor is D160.

This sequence belongs to the protein kinase superfamily. Ser/Thr protein kinase family. Poxviruses subfamily.

It catalyses the reaction L-seryl-[protein] + ATP = O-phospho-L-seryl-[protein] + ADP + H(+). It carries out the reaction L-threonyl-[protein] + ATP = O-phospho-L-threonyl-[protein] + ADP + H(+). This Vertebrata (FPV) protein is Probable serine/threonine-protein kinase FPV212.